We begin with the raw amino-acid sequence, 314 residues long: MATELDKIFLILEIAEFIIGMLGNVFIGLVNCSEGIKNQKVFSADFILTCLAISTIGQLFVILFDSFLVGLASHLYTTYRLGKPVIMLWHMTNHLTTWLATCLSIFYFFKIAHFPHSLFLWLRWRMNGMIVMLLILSLFLLIFNSLVLEIFIDISLNIIDKSNLTLYLDESKTVYDKLSILKTLLSLTSFIPFSLSLTSLLFLFLSLVRHTRNLKLSSLGSRDSSTEAHRRAMKMVMSFLFLFIVHFFSLQVANWIFFMLWNNKYIKFAMLALNAFPSCHSFILILGNSKLRQTAVRLLWHLRNYTKTPNPLPL.

The Extracellular segment spans residues 1-7; it reads MATELDK. Residues 8–28 form a helical membrane-spanning segment; sequence IFLILEIAEFIIGMLGNVFIG. Over 29-50 the chain is Cytoplasmic; sequence LVNCSEGIKNQKVFSADFILTC. Residues 51 to 71 traverse the membrane as a helical segment; that stretch reads LAISTIGQLFVILFDSFLVGL. Topologically, residues 72 to 101 are extracellular; that stretch reads ASHLYTTYRLGKPVIMLWHMTNHLTTWLAT. Residues 102–122 traverse the membrane as a helical segment; it reads CLSIFYFFKIAHFPHSLFLWL. Residues 123-127 lie on the Cytoplasmic side of the membrane; the sequence is RWRMN. The chain crosses the membrane as a helical span at residues 128 to 148; that stretch reads GMIVMLLILSLFLLIFNSLVL. Residues 149–187 lie on the Extracellular side of the membrane; the sequence is EIFIDISLNIIDKSNLTLYLDESKTVYDKLSILKTLLSL. Residue Asn-163 is glycosylated (N-linked (GlcNAc...) asparagine). The chain crosses the membrane as a helical span at residues 188 to 208; it reads TSFIPFSLSLTSLLFLFLSLV. Residues 209 to 238 lie on the Cytoplasmic side of the membrane; the sequence is RHTRNLKLSSLGSRDSSTEAHRRAMKMVMS. The chain crosses the membrane as a helical span at residues 239-259; it reads FLFLFIVHFFSLQVANWIFFM. The Extracellular segment spans residues 260–265; that stretch reads LWNNKY. The helical transmembrane segment at 266 to 286 threads the bilayer; sequence IKFAMLALNAFPSCHSFILIL. Residues 287–314 lie on the Cytoplasmic side of the membrane; it reads GNSKLRQTAVRLLWHLRNYTKTPNPLPL.

It belongs to the G-protein coupled receptor T2R family.

It localises to the membrane. In terms of biological role, receptor that may play a role in the perception of bitterness and is gustducin-linked. May play a role in sensing the chemical composition of the gastrointestinal content. The activity of this receptor may stimulate alpha gustducin, mediate PLC-beta-2 activation and lead to the gating of TRPM5. The polypeptide is Taste receptor type 2 member 42 (TAS2R42) (Pan troglodytes (Chimpanzee)).